A 396-amino-acid polypeptide reads, in one-letter code: MTNEEPLPKKVRLSETDFKVMARDELILRWKQYEAYVQALEGKYTDLNSNDVTGLRESEEKLKQQQQESARRENILVMRLATKEQEMQECTTQIQYLKQVQQPSVAQLRSTMVDPAINLFFLKMKGELEQTKDKLEQAQNELSAWKFTPDSQTGKKLMAKCRMLIQENQELGRQLSQGRIAQLEAELALQKKYSEELKSSQDELNDFIIQLDEEVEGMQSTILVLQQQLKETRQQLAQYQQQQSQASAPSTSRTTASEPVEQSEATSKDCSRLTNGPSNGSSSRQRTSGSGFHREGNTTEDDFPSSPGNGNKSSNSSEERTGRGGSGYVNQLSAGYESVDSPTGSENSLTHQSNDTDSSHDPQEEKAVSGKGNRTVGSRHVQNGLDSSVNVQGSVL.

Met-1 is subject to N-acetylmethionine. Ser-14 is modified (phosphoserine). 3 stretches are compositionally biased toward low complexity: residues 240-257, 278-291, and 304-316; these read QQQQ…TTAS, SNGS…SGSG, and PSSP…SSNS. Positions 240 to 396 are disordered; sequence QQQQSQASAP…SSVNVQGSVL (157 aa). Phosphoserine occurs at positions 305, 306, and 341. Over residues 340 to 356 the composition is skewed to polar residues; the sequence is DSPTGSENSLTHQSNDT. Thr-350 bears the Phosphothreonine mark. Basic and acidic residues predominate over residues 357 to 368; that stretch reads DSSHDPQEEKAV. The span at 380 to 396 shows a compositional bias: polar residues; the sequence is HVQNGLDSSVNVQGSVL. Phosphoserine is present on Ser-388.

The protein belongs to the fl(2)d family. In terms of assembly, component of the WMM complex, a N6-methyltransferase complex composed of a catalytic subcomplex, named MAC, and of an associated subcomplex, named MACOM. The MAC subcomplex is composed of METTL3 and METTL14. The MACOM subcomplex is composed of WTAP, ZC3H13, CBLL1/HAKAI, VIRMA, and, in some cases of RBM15 (RBM15 or RBM15B). Interacts with WT1. Also a component of a MACOM-like complex, named WTAP complex, composed of WTAP, ZC3H13, CBLL1, VIRMA, RBM15, BCLAF1 and THRAP3. In terms of tissue distribution, ubiquitously expressed.

It is found in the nucleus speckle. The protein resides in the nucleus. The protein localises to the nucleoplasm. Its subcellular location is the cytoplasm. Functionally, associated component of the WMM complex, a complex that mediates N6-methyladenosine (m6A) methylation of RNAs, a modification that plays a role in the efficiency of mRNA splicing and RNA processing. Required for accumulation of METTL3 and METTL14 to nuclear speckle. Acts as a mRNA splicing regulator. Regulates G2/M cell-cycle transition by binding to the 3' UTR of CCNA2, which enhances its stability. Impairs WT1 DNA-binding ability and inhibits expression of WT1 target genes. This Homo sapiens (Human) protein is Pre-mRNA-splicing regulator WTAP.